Reading from the N-terminus, the 1112-residue chain is Rho GTPase-activating protein 7 (1112 aa).

The SAM domain occupies 37 to 104; sequence LAEIEAKEAC…LNKCAVMKLE (68 aa). Phosphoserine is present on residues serine 112, serine 115, and serine 155. Disordered regions lie at residues 146–203, 318–350, 405–459, and 512–574; these read SPKQ…APAR, RSIS…RTRS, PKAL…VSSR, and SDEG…GVGA. A compositionally biased stretch (polar residues) spans 183–193; it reads VHSTGSLTTHA. Residues 296–468 form a focal adhesion-targeting (FAT) region; the sequence is QLNCVEISAL…RLSIYDNVPG (173 aa). Low complexity-rich tracts occupy residues 320 to 348 and 409 to 423; these read ISSS…VTRT and SNGS…SSVN. Serine 343 is modified (phosphoserine). Residues 437-446 show a composition bias toward basic and acidic residues; that stretch reads LRRENSSPKE. Positions 520–532 are enriched in polar residues; it reads ALDSVSPCPSSPK. Positions 534–544 are enriched in basic and acidic residues; sequence IHLDVDNDRAT. The segment covering 547 to 556 has biased composition (polar residues); the sequence is DLDSTGNSLN. The polybasic cluster (PBR) stretch occupies residues 635-657; that stretch reads KHGFSWAVPKFMKRIKVPDYKDR. The Rho-GAP domain occupies 662 to 868; it reads VPLTVNVQRT…HMIAECKKLF (207 aa). Residues 898–1105 enclose the START domain; that stretch reads CNDDSADYQH…RDSFSHQNTE (208 aa).

In terms of assembly, interacts with EF1A1, facilitates EF1A1 distribution to the membrane periphery and ruffles upon growth factor stimulation and suppresses cell migration. Interacts with tensin TNS1 (via N-terminus); the interaction is decreased by phosphorylation of TNS1. Interacts with TNS3 and PTEN; in resting cells, interacts with TNS3 (via C2 tensin-type domain) but, following growth factor stimulation, TNS3 and PTEN are phosphorylated which leads to weakened interaction with TNS3 and enhanced interaction with PTEN. Interacts (via C-terminus) with tensin TNS4 (via SH2 domain); the interaction is independent of tyrosine phosphorylation of DLC1.

It is found in the cytoplasm. It localises to the cell junction. The protein localises to the focal adhesion. Its subcellular location is the membrane. In terms of biological role, functions as a GTPase-activating protein for the small GTPases RHOA, RHOB, RHOC and CDC42, terminating their downstream signaling. This induces morphological changes and detachment through cytoskeletal reorganization, playing a critical role in biological processes such as cell migration and proliferation. Also functions in vivo as an activator of the phospholipase PLCD1. Active DLC1 increases cell migration velocity but reduces directionality. Required for growth factor-induced epithelial cell migration; in resting cells, interacts with TNS3 while PTEN interacts with the p85 regulatory subunit of the PI3K kinase complex but growth factor stimulation induces phosphorylation of TNS3 and PTEN, causing them to change their binding preference so that PTEN interacts with DLC1 and TNS3 interacts with p85. The PTEN-DLC1 complex translocates to the posterior of migrating cells to activate RHOA while the TNS3-p85 complex translocates to the leading edge of migrating cells to promote RAC1 activation. In Bos taurus (Bovine), this protein is Rho GTPase-activating protein 7 (DLC1).